The following is a 196-amino-acid chain: V-type proton ATPase subunit E (196 aa).

It belongs to the V-ATPase E subunit family.

In terms of biological role, produces ATP from ADP in the presence of a proton gradient across the membrane. In Clostridium botulinum (strain Alaska E43 / Type E3), this protein is V-type proton ATPase subunit E.